Here is a 216-residue protein sequence, read N- to C-terminus: Protein Syd (216 aa).

It belongs to the Syd family.

The protein localises to the cell inner membrane. In terms of biological role, interacts with the SecY protein in vivo. May bind preferentially to an uncomplexed state of SecY, thus functioning either as a chelating agent for excess SecY in the cell or as a regulatory factor that negatively controls the translocase function. This chain is Protein Syd, found in Shewanella sp. (strain ANA-3).